The chain runs to 55 residues: Caltrin-like protein 2 (55 aa).

In terms of domain architecture, WAP spans 7–55; that stretch reads AINRPGSCPRVMIYCPARHPPNKCTSDYDCPKPQKCCPGYCGKQCYQPE.

Glycosylated.

Inhibits calcium transport into spermatozoa. The polypeptide is Caltrin-like protein 2 (Cavia porcellus (Guinea pig)).